A 749-amino-acid chain; its full sequence is G-type lectin S-receptor-like serine/threonine-protein kinase At1g61460 (749 aa).

The N-terminal stretch at methionine 1–alanine 25 is a signal peptide. The 120-residue stretch at glycine 26–phenylalanine 145 folds into the Bulb-type lectin domain. Over glycine 26–threonine 392 the chain is Extracellular. 4 N-linked (GlcNAc...) asparagine glycosylation sites follow: asparagine 54, asparagine 95, asparagine 118, and asparagine 135. An EGF-like; atypical domain is found at proline 247 to glutamate 280. Cystine bridges form between cysteine 251–cysteine 263 and cysteine 257–cysteine 268. N-linked (GlcNAc...) asparagine glycans are attached at residues asparagine 286, asparagine 302, and asparagine 341. Residues cysteine 299–arginine 381 enclose the PAN domain. 2 disulfides stabilise this stretch: cysteine 334–cysteine 355 and cysteine 338–cysteine 344. A helical membrane pass occupies residues isoleucine 393–phenylalanine 413. Residues tryptophan 414–arginine 749 lie on the Cytoplasmic side of the membrane. In terms of domain architecture, Protein kinase spans phenylalanine 454–phenylalanine 721. ATP is bound by residues leucine 460–valine 468 and lysine 482. Residues arginine 543–isoleucine 560 form a caM-binding region. Aspartate 579 acts as the Proton acceptor in catalysis.

Belongs to the protein kinase superfamily. Ser/Thr protein kinase family.

It localises to the cell membrane. It catalyses the reaction L-seryl-[protein] + ATP = O-phospho-L-seryl-[protein] + ADP + H(+). The enzyme catalyses L-threonyl-[protein] + ATP = O-phospho-L-threonyl-[protein] + ADP + H(+). This Arabidopsis thaliana (Mouse-ear cress) protein is G-type lectin S-receptor-like serine/threonine-protein kinase At1g61460.